A 1131-amino-acid chain; its full sequence is Protein DWARF 53 (1131 aa).

Residues 8–181 (ARQCLSPAAV…KLAILRPAPP (174 aa)) form the Clp R domain. Repeat regions lie at residues 12-85 (LSPA…LDRL) and 103-181 (VSNS…PAPP). Residues 511-574 (NRDPYKPFPR…ISSPSVTNKR (64 aa)) form a disordered region. Over residues 558 to 569 (SSSTARPISSPS) the composition is skewed to low complexity. An EAR 1 motif is present at residues 578 to 582 (LVLNL). Residues 588–655 (KSDENLQERG…KRVEDSERSV (68 aa)) are disordered. A compositionally biased stretch (polar residues) spans 597-609 (GMQSQHGTLSNVD). Positions 646–655 (KRVEDSERSV) are enriched in basic and acidic residues. An EAR 2 motif is present at residues 799–803 (LDLNL). 2 disordered regions span residues 951-970 (ISDDQEKLQESPSSSKRLHR) and 976-1002 (FDLNLPVDEDEPLDADDDSSSHENSYG). The EAR 3 motif lies at 976–981 (FDLNLP). Residues 982-993 (VDEDEPLDADDD) show a composition bias toward acidic residues.

It belongs to the ClpA/ClpB family. Interacts with D3. Interacts with D14. The interaction with D14 is enhanced in the presence of strigolactones. The interaction with D14 occurs in the presence of (2'R) stereoisomers of strigolactones, but not (2'S) stereoisomers. Interacts with the TOPLESS-related proteins TPR1, TPR2 and TPR3. Interacts with SPL14/IPA1. In terms of processing, polyubiquitinated. Strigolactone, but not karrikin, triggers rapid SCF(D3)-dependent degradation via the proteasome. As to expression, expressed in the shoot bases of seedlings, young leaves, axillary buds and young panicles. Expressed in young roots vasculature, culms, internodes and nodes, preferentially in the parenchyma cells surrounding the xylem.

It localises to the nucleus. Repressor of strigolactones (SL) signaling. Subjected to a negative feedback control of SL signaling. Suppresses the transcriptional activation activity of SPL14/IPA1 in SL signaling. Acts with SPL14/IPA1 to mediate the SL-regulated tiller development. Subject to a negative feedback regulation by SPL14/IPA1, which binds to D53 promoter to repress D53 gene expression. The sequence is that of Protein DWARF 53 from Oryza sativa subsp. japonica (Rice).